Reading from the N-terminus, the 100-residue chain is Small ribosomal subunit protein uS14c (100 aa).

This sequence belongs to the universal ribosomal protein uS14 family. In terms of assembly, part of the 30S ribosomal subunit.

Its subcellular location is the plastid. It is found in the chloroplast. Functionally, binds 16S rRNA, required for the assembly of 30S particles. The polypeptide is Small ribosomal subunit protein uS14c (Olimarabidopsis pumila (Dwarf rocket)).